The chain runs to 433 residues: Putative purine permease YbbY (433 aa).

At 1 to 17 (MFNFAVSRESLLSGFQW) the chain is on the periplasmic side. The chain crosses the membrane as a helical span at residues 18 to 38 (FFFIFCNTVVVPPTLLSAFQL). Residues 39-42 (PQSS) lie on the Cytoplasmic side of the membrane. Residues 43–63 (LLTLTQYAFLATALACFAQAF) form a helical membrane-spanning segment. The Periplasmic segment spans residues 64 to 68 (CGHRR). A helical transmembrane segment spans residues 69-89 (AIMEGPGGLWWGTILTITLGE). Over 90–102 (ASRGTPINDIATS) the chain is Cytoplasmic. The helical transmembrane segment at 103 to 123 (LAVGIALSGVLTMLIGFSGLG) threads the bilayer. Topologically, residues 124-130 (HRLARLF) are periplasmic. A helical membrane pass occupies residues 131–151 (TPSVMVLFMLMLGAQLTTIFF). At 152–169 (KGMLGLPFGIADPNFKIQ) the chain is on the cytoplasmic side. The chain crosses the membrane as a helical span at residues 170-190 (LPPFALSVAVMCLVLAMIIFL). The Periplasmic portion of the chain corresponds to 191 to 196 (PQRFAR). Residues 197 to 217 (YGLLVGTITGWLLWYFCFPSS) traverse the membrane as a helical segment. At 218-230 (HSLSGELHWQWFP) the chain is on the cytoplasmic side. A helical transmembrane segment spans residues 231 to 251 (LGSGGALSPGIILTAVITGLV). At 252–288 (NISNTYGAIRGTDVFYPQQGAGNTRYRRSFVATGFMT) the chain is on the periplasmic side. A helical transmembrane segment spans residues 289 to 309 (LITVPLAVIPFSPFVSSIGLL). Topologically, residues 310 to 319 (TQTGDYTRRS) are cytoplasmic. Residues 320–340 (FIYGSVICLLVALVPALTRLF) traverse the membrane as a helical segment. At 341 to 345 (CSIPL) the chain is on the periplasmic side. Residues 346–366 (PVSSAVMLVSYLPLLFSALVF) form a helical membrane-spanning segment. The Cytoplasmic portion of the chain corresponds to 367-379 (SQQITFTARNIYR). The chain crosses the membrane as a helical span at residues 380–400 (LALPLFVGIFLMALPPVYLQD). Over 401–407 (LPLTLRP) the chain is Periplasmic. A helical membrane pass occupies residues 408–428 (LLSNGLLVGILLAVLMDNLIP). Residues 429–433 (WERIE) are Cytoplasmic-facing.

It belongs to the nucleobase:cation symporter-2 (NCS2) (TC 2.A.40) family.

The protein localises to the cell inner membrane. The chain is Putative purine permease YbbY (ybbY) from Escherichia coli (strain K12).